Here is an 88-residue protein sequence, read N- to C-terminus: Acyl-CoA-binding domain-containing protein 7 (88 aa).

An ACB domain is found at 3–88 (LQADFDKAAK…AKELIEKYGI (86 aa)). An acyl-CoA is bound by residues R15, 30–34 (YGLYK), K56, and Y75.

This sequence belongs to the ACBD7 family.

In terms of biological role, binds medium- and long-chain acyl-CoA esters. This Bos taurus (Bovine) protein is Acyl-CoA-binding domain-containing protein 7 (ACBD7).